Reading from the N-terminus, the 238-residue chain is Doublecortin domain-containing protein (238 aa).

Residues 82–112 form a partial p25alpha domain region; that stretch reads VFERLNDKQFYTGVQKTKFMELLKNNKNKSS. Residues 151–232 form the Doublecortin domain; it reads KTIFLFNNEK…GDPPAPIRNL (82 aa).

Interacts with alpha-tubulin 1 and beta-tubulin; the interaction stabilizes microtubule assembly.

The protein resides in the cytoplasm. It is found in the cytoskeleton. Functionally, involved in the stabilization of microtubules. Probably by controlling microtubules stabilization, plays a role in invasion, microneme secretion and parasite growth in host erythrocytes. The protein is Doublecortin domain-containing protein of Plasmodium falciparum (isolate 3D7).